The sequence spans 64 residues: Large ribosomal subunit protein uL30 (64 aa).

This sequence belongs to the universal ribosomal protein uL30 family. In terms of assembly, part of the 50S ribosomal subunit.

The protein is Large ribosomal subunit protein uL30 of Methylorubrum extorquens (strain CM4 / NCIMB 13688) (Methylobacterium extorquens).